A 121-amino-acid polypeptide reads, in one-letter code: Acid shock protein (121 aa).

A signal peptide spans 1-21 (MKKVLALMVAATLGLSSVAFA). Positions 22–63 (ADTTATATPAATSTTATVAAQTKATQHQKHKVTKKTTEQKAQ) are excised as a propeptide. The disordered stretch occupies residues 40-121 (AAQTKATQHQ…AKKPVAAPAA (82 aa)). The segment covering 84-93 (AAKKHVKKAS) has biased composition (basic residues). The span at 94 to 103 (VQKAPVQKAQ) shows a compositional bias: low complexity. A compositionally biased stretch (basic residues) spans 104–113 (AAKKHHKTAK).

The protein belongs to the Asr family. Proteolytic processing gives rise to the active protein.

Its subcellular location is the periplasm. Required for growth and/or survival at acidic conditions. The chain is Acid shock protein from Yersinia pestis bv. Antiqua (strain Antiqua).